Here is a 501-residue protein sequence, read N- to C-terminus: Ribose import ATP-binding protein RbsA (501 aa).

ABC transporter domains follow at residues 5–241 and 252–495; these read LQLQ…VGRK and APGE…VGKQ. 37-44 is an ATP binding site; that stretch reads GENGAGKS.

The protein belongs to the ABC transporter superfamily. Ribose importer (TC 3.A.1.2.1) family. As to quaternary structure, the complex is composed of an ATP-binding protein (RbsA), two transmembrane proteins (RbsC) and a solute-binding protein (RbsB).

Its subcellular location is the cell inner membrane. The catalysed reaction is D-ribose(out) + ATP + H2O = D-ribose(in) + ADP + phosphate + H(+). Functionally, part of the ABC transporter complex RbsABC involved in ribose import. Responsible for energy coupling to the transport system. This Pectobacterium atrosepticum (strain SCRI 1043 / ATCC BAA-672) (Erwinia carotovora subsp. atroseptica) protein is Ribose import ATP-binding protein RbsA.